A 103-amino-acid chain; its full sequence is Small ribosomal subunit protein uS10 (103 aa).

The protein belongs to the universal ribosomal protein uS10 family. Part of the 30S ribosomal subunit.

In terms of biological role, involved in the binding of tRNA to the ribosomes. This Buchnera aphidicola subsp. Acyrthosiphon pisum (strain 5A) protein is Small ribosomal subunit protein uS10.